The sequence spans 899 residues: Protein argonaute (899 aa).

A disordered region spans residues 107-129 (TQKPKRRGGRAGGMRGNRGGPST). Residues 116-125 (RAGGMRGNRG) show a composition bias toward gly residues. Positions 229–313 (SMCELLNENR…KQDDYCNSVL (85 aa)) constitute a PAZ domain. The 324-residue stretch at 555–878 (LVVVVIPGPK…LSKFCGEILG (324 aa)) folds into the Piwi domain.

This sequence belongs to the argonaute family. Ago subfamily. In terms of assembly, interacts with miR2. Highly specific binding to the mRNA m7G-cap. May be a component of the RNA-induced silencing complex (RISC), a sequence-specific, multicomponent nuclease that destroys or silences messenger RNAs homologous to the silencing trigger.

The protein resides in the cytoplasm. In terms of biological role, plays an essential role in growth and, with Dicer, also involved in microRNA (miRNA)-mediated translational repression. The RNA interference pathway is implicated in antigenic variation having a role in regulation of variant-specific surface protein (VSP)-coding gene expression. Several VSP genes are transcribed but only transcripts encoding the VSP to be expressed accumulate. Antisense RNAs corresponding to the silenced VSP genes are detected. The protein is Protein argonaute of Giardia intestinalis (strain ATCC 50581 / GS clone H7) (Giardia lamblia).